A 156-amino-acid chain; its full sequence is Small ribosomal subunit protein uS7 (156 aa).

It belongs to the universal ribosomal protein uS7 family. Part of the 30S ribosomal subunit. Contacts proteins S9 and S11.

One of the primary rRNA binding proteins, it binds directly to 16S rRNA where it nucleates assembly of the head domain of the 30S subunit. Is located at the subunit interface close to the decoding center, probably blocks exit of the E-site tRNA. The sequence is that of Small ribosomal subunit protein uS7 from Lacticaseibacillus casei (strain BL23) (Lactobacillus casei).